The primary structure comprises 165 residues: Phosphopantetheine adenylyltransferase (165 aa).

Substrate is bound at residue threonine 9. ATP is bound by residues 9 to 10 and histidine 17; that span reads TF. Positions 41, 78, and 92 each coordinate substrate. Residues 93–95, glutamate 103, and 128–134 contribute to the ATP site; these read GLR and HQAIASK.

Belongs to the bacterial CoaD family. Homohexamer. Mg(2+) is required as a cofactor.

Its subcellular location is the cytoplasm. It catalyses the reaction (R)-4'-phosphopantetheine + ATP + H(+) = 3'-dephospho-CoA + diphosphate. It participates in cofactor biosynthesis; coenzyme A biosynthesis; CoA from (R)-pantothenate: step 4/5. Functionally, reversibly transfers an adenylyl group from ATP to 4'-phosphopantetheine, yielding dephospho-CoA (dPCoA) and pyrophosphate. In Ruegeria sp. (strain TM1040) (Silicibacter sp.), this protein is Phosphopantetheine adenylyltransferase.